Reading from the N-terminus, the 140-residue chain is Methylglyoxal synthase (140 aa).

The 140-residue stretch at 1–140 (MKIALIAHDR…HDQDSNPINL (140 aa)) folds into the MGS-like domain. Substrate is bound by residues His-8, Lys-12, 34–37 (TGTT), and 54–55 (SG). Asp-60 serves as the catalytic Proton donor/acceptor. Residue His-87 coordinates substrate.

Belongs to the methylglyoxal synthase family.

The catalysed reaction is dihydroxyacetone phosphate = methylglyoxal + phosphate. Catalyzes the formation of methylglyoxal from dihydroxyacetone phosphate. The polypeptide is Methylglyoxal synthase (Latilactobacillus sakei subsp. sakei (strain 23K) (Lactobacillus sakei subsp. sakei)).